Consider the following 183-residue polypeptide: Ribosome rescue factor SmrB (183 aa).

Residues 98 to 173 (LDLHGLTQLQ…GDAALLVLIE (76 aa)) form the Smr domain.

It belongs to the SmrB family. As to quaternary structure, associates with collided ribosomes, but not with correctly translating polysomes.

Its function is as follows. Acts as a ribosome collision sensor. Detects stalled/collided disomes (pairs of ribosomes where the leading ribosome is stalled and a second ribosome has collided with it) and endonucleolytically cleaves mRNA at the 5' boundary of the stalled ribosome. Stalled/collided disomes form a new interface (primarily via the 30S subunits) that binds SmrB. Cleaved mRNA becomes available for tmRNA ligation, leading to ribosomal subunit dissociation and rescue of stalled ribosomes. The chain is Ribosome rescue factor SmrB from Escherichia coli O7:K1 (strain IAI39 / ExPEC).